The primary structure comprises 460 residues: uncharacterized protein (460 aa).

The 59-residue stretch at 8–66 (PVEKNEFIDVVFEDLTHDGAGVAKVKGYPIFVKNGLPGEEAQIKIIKVKKNFAFGRLMK) folds into the TRAM domain. Positions 79, 85, 88, and 166 each coordinate [4Fe-4S] cluster. S-adenosyl-L-methionine-binding residues include glutamine 290, tyrosine 319, glutamate 340, and aspartate 388. Cysteine 415 acts as the Nucleophile in catalysis.

It belongs to the class I-like SAM-binding methyltransferase superfamily. RNA M5U methyltransferase family.

This is an uncharacterized protein from Bacillus cereus (strain ATCC 10987 / NRS 248).